The sequence spans 535 residues: GMP synthase [glutamine-hydrolyzing] (535 aa).

The Glutamine amidotransferase type-1 domain maps to 20-210 (PVLVVDFGAQ…LHRCAALPND (191 aa)). The active-site Nucleophile is Cys97. Residues His184 and Glu186 contribute to the active site. One can recognise a GMPS ATP-PPase domain in the interval 211-409 (WDASSIIEDQ…LGLPDEIVWR (199 aa)). Position 238-244 (238-244 (SGGVDSA)) interacts with ATP.

As to quaternary structure, homodimer.

The catalysed reaction is XMP + L-glutamine + ATP + H2O = GMP + L-glutamate + AMP + diphosphate + 2 H(+). Its pathway is purine metabolism; GMP biosynthesis; GMP from XMP (L-Gln route): step 1/1. Catalyzes the synthesis of GMP from XMP. This chain is GMP synthase [glutamine-hydrolyzing], found in Bifidobacterium longum (strain NCC 2705).